A 125-amino-acid chain; its full sequence is Glycine cleavage system H protein (125 aa).

Residues 23–103 enclose the Lipoyl-binding domain; the sequence is TALVGITDFA…PYNAWLIKMK (81 aa). The residue at position 64 (K64) is an N6-lipoyllysine.

Belongs to the GcvH family. The glycine cleavage system is composed of four proteins: P, T, L and H. The cofactor is (R)-lipoate.

The glycine cleavage system catalyzes the degradation of glycine. The H protein shuttles the methylamine group of glycine from the P protein to the T protein. This Chlorobium chlorochromatii (strain CaD3) protein is Glycine cleavage system H protein.